Consider the following 967-residue polypeptide: Leucine-rich repeat receptor-like protein kinase PXC2 (967 aa).

A signal peptide spans 1 to 20; the sequence is MFNGAVSLLFLFLAVVSARA. Residues 21–609 are Extracellular-facing; the sequence is DPTFNDDVLG…QIRKSVLSIS (589 aa). LRR repeat units follow at residues 91–114, 115–139, 141–164, 165–189, 191–212, 214–236, 237–260, 262–284, 285–307, 308–332, and 334–356; these read LQFLHTLVLSNNNLTGTLNPEFPH, LGSLQVVDFSGNNLSGRIPDGFFEQ, GSLRSVSLANNKLTGSIPVSLSYC, STLTHLNLSSNQLSGRLPRDIWFLK, LKSLDFSHNFLQGDIPDGLGGL, DLRHINLSRNWFSGDVPSDIGRC, SSLKSLDLSENYFSGNLPDSMKSL, SCSSIRLRGNSLIGEIPDWIGDI, ATLEILDLSANNFTGTVPFSLGN, LEFLKDLNLSANMLAGELPQTLSNC, and NLISIDVSKNSFTGDVLKWMFTG. 2 N-linked (GlcNAc...) asparagine glycosylation sites follow: N103 and N127. Residue N171 is glycosylated (N-linked (GlcNAc...) asparagine). N-linked (GlcNAc...) asparagine glycosylation is present at N219. N296, N315, and N331 each carry an N-linked (GlcNAc...) asparagine glycan. A glycan (N-linked (GlcNAc...) asparagine) is linked at N374. LRR repeat units follow at residues 384–408, 410–432, 433–456, 457–480, 482–503, 504–528, and 530–552; these read LQGLRVLDLSSNGFTGELPSNIWIL, SLLQLNMSTNSLFGSIPTGIGGL, KVAEILDLSSNLLNGTLPSEIGGA, VSLKQLHLHRNRLSGQIPAKISNC, ALNTINLSENELSGAIPGSIGS, LSNLEYIDLSRNNLSGSLPKEIEKL, and HLLTFNISHNNITGELPAGGFFN. N415, N446, N479, N487, N516, N535, N540, N571, and N587 each carry an N-linked (GlcNAc...) asparagine glycan. Residues 610-630 form a helical membrane-spanning segment; the sequence is ALIAIGAAAVIAIGVVAVTLL. The Cytoplasmic portion of the chain corresponds to 631–967; that stretch reads NVHARSSVSR…LIQCPSHDLE (337 aa). The Protein kinase domain maps to 687–959; sequence LNKDSELGRG…EEVVKILELI (273 aa). ATP-binding positions include 693 to 701 and K715; that span reads LGRGGFGVV.

Belongs to the protein kinase superfamily. Ser/Thr protein kinase family. Expressed in the vascular strands of cotyledons, the shoot apex, hypocotyls, roots, leaves, stems and flowers.

The protein resides in the cell membrane. In terms of biological role, leucine-rich repeat receptor-like protein kinase that may play a role in vascular tissues development. This chain is Leucine-rich repeat receptor-like protein kinase PXC2, found in Arabidopsis thaliana (Mouse-ear cress).